The primary structure comprises 156 residues: Cyclic pyranopterin monophosphate synthase (156 aa).

Residues 73 to 75 (LCH) and 110 to 111 (ME) contribute to the substrate site. D125 is a catalytic residue.

This sequence belongs to the MoaC family. In terms of assembly, homohexamer; trimer of dimers.

It catalyses the reaction (8S)-3',8-cyclo-7,8-dihydroguanosine 5'-triphosphate = cyclic pyranopterin phosphate + diphosphate. It functions in the pathway cofactor biosynthesis; molybdopterin biosynthesis. Functionally, catalyzes the conversion of (8S)-3',8-cyclo-7,8-dihydroguanosine 5'-triphosphate to cyclic pyranopterin monophosphate (cPMP). This is Cyclic pyranopterin monophosphate synthase from Pseudomonas entomophila (strain L48).